The primary structure comprises 453 residues: Serine--tRNA ligase (453 aa).

252 to 254 (TAE) contributes to the L-serine binding site. Residues 283-285 (RKE) and valine 299 each bind ATP. An L-serine-binding site is contributed by glutamate 306. Residue 370–373 (EMVS) participates in ATP binding. Threonine 405 contributes to the L-serine binding site.

It belongs to the class-II aminoacyl-tRNA synthetase family. Type-1 seryl-tRNA synthetase subfamily. In terms of assembly, homodimer. The tRNA molecule binds across the dimer.

The protein localises to the cytoplasm. The enzyme catalyses tRNA(Ser) + L-serine + ATP = L-seryl-tRNA(Ser) + AMP + diphosphate + H(+). It catalyses the reaction tRNA(Sec) + L-serine + ATP = L-seryl-tRNA(Sec) + AMP + diphosphate + H(+). It participates in aminoacyl-tRNA biosynthesis; selenocysteinyl-tRNA(Sec) biosynthesis; L-seryl-tRNA(Sec) from L-serine and tRNA(Sec): step 1/1. Its function is as follows. Catalyzes the attachment of serine to tRNA(Ser). Is also able to aminoacylate tRNA(Sec) with serine, to form the misacylated tRNA L-seryl-tRNA(Sec), which will be further converted into selenocysteinyl-tRNA(Sec). The chain is Serine--tRNA ligase from Sulfurisphaera tokodaii (strain DSM 16993 / JCM 10545 / NBRC 100140 / 7) (Sulfolobus tokodaii).